Here is a 189-residue protein sequence, read N- to C-terminus: Transcription factor E (189 aa).

The HTH TFE/IIEalpha-type domain occupies 9–101 (AVKSLEIYVR…FWRIDSDTIN (93 aa)).

The protein belongs to the TFE family. In terms of assembly, monomer. Interaction with RNA polymerase subunits RpoF and RpoE is necessary for Tfe stimulatory transcription activity. Able to interact with Tbp and RNA polymerase in the absence of DNA promoter. Interacts both with the preinitiation and elongation complexes.

In terms of biological role, transcription factor that plays a role in the activation of archaeal genes transcribed by RNA polymerase. Facilitates transcription initiation by enhancing TATA-box recognition by TATA-box-binding protein (Tbp), and transcription factor B (Tfb) and RNA polymerase recruitment. Not absolutely required for transcription in vitro, but particularly important in cases where Tbp or Tfb function is not optimal. It dynamically alters the nucleic acid-binding properties of RNA polymerases by stabilizing the initiation complex and destabilizing elongation complexes. Seems to translocate with the RNA polymerase following initiation and acts by binding to the non template strand of the transcription bubble in elongation complexes. This chain is Transcription factor E, found in Aeropyrum pernix (strain ATCC 700893 / DSM 11879 / JCM 9820 / NBRC 100138 / K1).